A 270-amino-acid polypeptide reads, in one-letter code: Acyl-[acyl-carrier-protein]--UDP-N-acetylglucosamine O-acyltransferase (270 aa).

This sequence belongs to the transferase hexapeptide repeat family. LpxA subfamily. In terms of assembly, homotrimer.

It localises to the cytoplasm. The catalysed reaction is a (3R)-hydroxyacyl-[ACP] + UDP-N-acetyl-alpha-D-glucosamine = a UDP-3-O-[(3R)-3-hydroxyacyl]-N-acetyl-alpha-D-glucosamine + holo-[ACP]. It functions in the pathway glycolipid biosynthesis; lipid IV(A) biosynthesis; lipid IV(A) from (3R)-3-hydroxytetradecanoyl-[acyl-carrier-protein] and UDP-N-acetyl-alpha-D-glucosamine: step 1/6. Its function is as follows. Involved in the biosynthesis of lipid A, a phosphorylated glycolipid that anchors the lipopolysaccharide to the outer membrane of the cell. This Helicobacter pylori (strain Shi470) protein is Acyl-[acyl-carrier-protein]--UDP-N-acetylglucosamine O-acyltransferase.